Here is a 364-residue protein sequence, read N- to C-terminus: MSTPSSLQVLVKRVLDFQHVSEDDYCILKCCGLWWHGGPIMLSTNEDNQMMIKSASFKDGLEINLALMMAVQENNCSLIELFTEWGADINSGLVTVNTEYTRNLCRNLGAKETLNKREILDVFLKLKNFKSSNNIILSHELLSNNPLFLSEDNDYFRRIINCNLRRISINFILDEISFNEKLTRFWYSQAVLYNLTEAIQYFYQKYEHLNEWRLICALSFNNVFDLHEIYNKEKVGMDINQMIEITCAYMCSYSTIYYCFVMGADINRAMIISVTKSYTYNLFFCIDLGATAFEECLEIAKQQNNNELVKILSLKNYYSPDSSLISLKITDPEKINILLDEENYESKNELIYEESNINNSDDIF.

This sequence belongs to the asfivirus MGF 360 family.

In terms of biological role, plays a role in virus cell tropism, and may be required for efficient virus replication in macrophages. The protein is Protein MGF 360-21R of African swine fever virus (isolate Pig/Kenya/KEN-50/1950) (ASFV).